Here is a 456-residue protein sequence, read N- to C-terminus: Trigger factor (456 aa).

In terms of domain architecture, PPIase FKBP-type spans 192 to 277; sequence GDTVVIDFVG…IHEVKTKEVP (86 aa).

The protein belongs to the FKBP-type PPIase family. Tig subfamily.

It is found in the cytoplasm. The catalysed reaction is [protein]-peptidylproline (omega=180) = [protein]-peptidylproline (omega=0). In terms of biological role, involved in protein export. Acts as a chaperone by maintaining the newly synthesized protein in an open conformation. Functions as a peptidyl-prolyl cis-trans isomerase. The polypeptide is Trigger factor (Streptococcus pyogenes serotype M2 (strain MGAS10270)).